Consider the following 109-residue polypeptide: Ferredoxin CarAc (109 aa).

The region spanning 3-108 (AKVRVIFRAA…GLTLELPKAQ (106 aa)) is the 2Fe-2S ferredoxin-type domain. Positions 43, 49, 52, and 89 each coordinate [2Fe-2S] cluster.

The protein belongs to the adrenodoxin/putidaredoxin family. In terms of assembly, monomer. Carbazole 1,9a-dioxygenase complex consists of a terminal oxygenase component CarAa, a ferredoxin reductase component fdr and a ferredoxin component CarAc. It depends on [2Fe-2S] cluster as a cofactor.

In terms of biological role, part of the multicomponent carbazole 1,9a-dioxygenase (CARDO), that converts carbazole (CAR) into 2-aminobiphenyl-2,3-diol. Acts as a mediator in the electron transfer from fdr to CarAa. The protein is Ferredoxin CarAc (carAc) of Sphingomonas sp.